The following is a 173-amino-acid chain: NADH-ubiquinone oxidoreductase chain 6 (173 aa).

The next 5 helical transmembrane spans lie at methionine 1–serine 21, alanine 24–valine 44, leucine 53–leucine 73, serine 86–tryptophan 106, and tyrosine 139–leucine 159.

It belongs to the complex I subunit 6 family.

It localises to the mitochondrion membrane. The catalysed reaction is a ubiquinone + NADH + 5 H(+)(in) = a ubiquinol + NAD(+) + 4 H(+)(out). In terms of biological role, core subunit of the mitochondrial membrane respiratory chain NADH dehydrogenase (Complex I) that is believed to belong to the minimal assembly required for catalysis. Complex I functions in the transfer of electrons from NADH to the respiratory chain. The immediate electron acceptor for the enzyme is believed to be ubiquinone. In Formosania lacustris (Oriental stream loach), this protein is NADH-ubiquinone oxidoreductase chain 6 (MT-ND6).